The chain runs to 111 residues: Antitoxin PrlF (111 aa).

Residues threonine 12–aspartate 59 enclose the SpoVT-AbrB domain.

In terms of assembly, homodimer; forms a complex with YhaV with stoichiometry PrlF(2)-YhaV(4), possibly as a YhaV(2)-PrlF(2)-YhaV(2) complex like the MazFE complex.

It is found in the cytoplasm. Its function is as follows. Antitoxin component of a type II toxin-antitoxin (TA) system. Labile antitoxin that binds to the YhaV toxin and neutralizes its ribonuclease activity. Also acts as a transcription factor. The YhaV/PrlF complex binds the prlF-yhaV operon, probably negatively regulating its expression. The chain is Antitoxin PrlF (prlF) from Escherichia coli O6:H1 (strain CFT073 / ATCC 700928 / UPEC).